Here is a 270-residue protein sequence, read N- to C-terminus: Molybdenum-pterin-binding protein MopB (270 aa).

2 Mop domains span residues 131–197 (RTSA…LLAG) and 203–269 (RLSV…ILAL).

Belongs to the ModE family.

The polypeptide is Molybdenum-pterin-binding protein MopB (mopB) (Rhodobacter capsulatus (Rhodopseudomonas capsulata)).